The following is a 254-amino-acid chain: Diphthine synthase (254 aa).

S-adenosyl-L-methionine-binding positions include Asp83, Leu86, 111-112, Leu163, and Val205; that span reads SI.

Belongs to the diphthine synthase family. Homodimer.

It carries out the reaction 2-[(3S)-amino-3-carboxypropyl]-L-histidyl-[translation elongation factor 2] + 3 S-adenosyl-L-methionine = diphthine-[translation elongation factor 2] + 3 S-adenosyl-L-homocysteine + 3 H(+). It functions in the pathway protein modification; peptidyl-diphthamide biosynthesis. Functionally, S-adenosyl-L-methionine-dependent methyltransferase that catalyzes the trimethylation of the amino group of the modified target histidine residue in translation elongation factor 2 (EF-2), to form an intermediate called diphthine. The three successive methylation reactions represent the second step of diphthamide biosynthesis. The polypeptide is Diphthine synthase (Pyrobaculum aerophilum (strain ATCC 51768 / DSM 7523 / JCM 9630 / CIP 104966 / NBRC 100827 / IM2)).